Consider the following 240-residue polypeptide: Protein GrpE (240 aa).

The segment covering 1 to 13 (MTDNQRQSTTDGQ) has biased composition (polar residues). Residues 1 to 89 (MTDNQRQSTT…DAEQKAEEHW (89 aa)) form a disordered region. Residues 20–38 (AQATAEAAEQTQATQASAA) show a composition bias toward low complexity. Basic and acidic residues predominate over residues 65 to 89 (EALRQRVEELEKALADAEQKAEEHW).

The protein belongs to the GrpE family. In terms of assembly, homodimer.

Its subcellular location is the cytoplasm. Participates actively in the response to hyperosmotic and heat shock by preventing the aggregation of stress-denatured proteins, in association with DnaK and GrpE. It is the nucleotide exchange factor for DnaK and may function as a thermosensor. Unfolded proteins bind initially to DnaJ; upon interaction with the DnaJ-bound protein, DnaK hydrolyzes its bound ATP, resulting in the formation of a stable complex. GrpE releases ADP from DnaK; ATP binding to DnaK triggers the release of the substrate protein, thus completing the reaction cycle. Several rounds of ATP-dependent interactions between DnaJ, DnaK and GrpE are required for fully efficient folding. This is Protein GrpE from Halorhodospira halophila (strain DSM 244 / SL1) (Ectothiorhodospira halophila (strain DSM 244 / SL1)).